The following is a 413-amino-acid chain: Histidine--tRNA ligase (413 aa).

This sequence belongs to the class-II aminoacyl-tRNA synthetase family. As to quaternary structure, homodimer.

Its subcellular location is the cytoplasm. It catalyses the reaction tRNA(His) + L-histidine + ATP = L-histidyl-tRNA(His) + AMP + diphosphate + H(+). The polypeptide is Histidine--tRNA ligase (hisS) (Rickettsia prowazekii (strain Madrid E)).